A 626-amino-acid chain; its full sequence is DNA-directed RNA polymerase subunit beta C-terminal section (626 aa).

The segment at 287–307 (NTKSKNTGKGSKPPRASKAQN) is disordered.

The protein belongs to the RNA polymerase beta chain family. As to quaternary structure, in plastids the minimal PEP RNA polymerase catalytic core is composed of four subunits: alpha, beta, beta', and beta''. When a (nuclear-encoded) sigma factor is associated with the core the holoenzyme is formed, which can initiate transcription.

It is found in the plastid. The protein localises to the chloroplast. It catalyses the reaction RNA(n) + a ribonucleoside 5'-triphosphate = RNA(n+1) + diphosphate. In terms of biological role, DNA-dependent RNA polymerase catalyzes the transcription of DNA into RNA using the four ribonucleoside triphosphates as substrates. In Chlamydomonas reinhardtii (Chlamydomonas smithii), this protein is DNA-directed RNA polymerase subunit beta C-terminal section (rpoB2).